Reading from the N-terminus, the 1174-residue chain is Lysylphosphatidylglycerol biosynthesis bifunctional protein LysX (1174 aa).

The phosphatidylglycerol lysyltransferase stretch occupies residues Met-1–Asp-665. The interval Val-9–Arg-36 is disordered. Residues Val-19–Asp-33 show a composition bias toward polar residues. Helical transmembrane passes span Val-82–Val-102, Phe-124–Ala-144, Ile-148–Ile-168, Phe-179–Tyr-199, Ala-216–Phe-236, Ala-274–Ser-294, and Val-614–Ser-634. Residues Val-666–His-1174 form a lysine--tRNA ligase region. The segment at residues Val-728–Ile-806 is a DNA-binding region (OB). The Mg(2+) site is built by Asp-1086 and Glu-1093.

It in the N-terminal section; belongs to the LPG synthetase family. In the C-terminal section; belongs to the class-II aminoacyl-tRNA synthetase family. Mg(2+) is required as a cofactor.

The protein resides in the cell membrane. It carries out the reaction tRNA(Lys) + L-lysine + ATP = L-lysyl-tRNA(Lys) + AMP + diphosphate. The enzyme catalyses L-lysyl-tRNA(Lys) + a 1,2-diacyl-sn-glycero-3-phospho-(1'-sn-glycerol) = a 1,2-diacyl-sn-glycero-3-phospho-1'-(3'-O-L-lysyl)-sn-glycerol + tRNA(Lys). Its function is as follows. Catalyzes the production of L-lysyl-tRNA(Lys)transfer and the transfer of a lysyl group from L-lysyl-tRNA(Lys) to membrane-bound phosphatidylglycerol (PG), which produces lysylphosphatidylglycerol (LPG), one of the components of the bacterial membrane with a positive net charge. LPG synthesis contributes to the resistance to cationic antimicrobial peptides (CAMPs) and likely protects M.tuberculosis against the CAMPs produced by competiting microorganisms (bacteriocins). In fact, the modification of anionic phosphatidylglycerol with positively charged L-lysine results in repulsion of the peptides. This Mycobacterium tuberculosis (strain KZN 1435 / MDR) protein is Lysylphosphatidylglycerol biosynthesis bifunctional protein LysX (lysX).